A 2244-amino-acid chain; its full sequence is MSGLLPSLSSSFPLVQSEALGMPRTHGPKPSENDPKEPTCSPSPAFYSVNGEMKDYKLMALELEDKSVLQGYSFGADHSVSGELVFQTGMVGYPESLTDPSYRGQILVFTFPTVGNYGVPDRRILDEISGLPKYFESNQIHVAAIIISSYSQNYSHFLAHSSLGEWLKEQGIPGIFGIDTRALTKKIRDQGSMLGRLLIQKDESPINPSSITGLGKDWSTAFEDIPWKNPNTENLTSQVSIKEPKLYEPHPTTAIKKADGKIIRILVIDVGMKYNQIRCFLNRGVELLVVPWDYDFTKETYDGLFISNGPGDPSLMDLVVDRVKRVLESKTVPVFGICFGHQIMARAAGASTTKMKFGNRGHNIPCTCMISGRCYITSQNHGYAVDASSLSNGWKELFVNANDGSNEGIYNTEYPFFSVQFHPESTPGPRDTEFLFDVFIDVVKRSADAKSLQPFKLPGGTIEENRSRHPLVDAKRVLILGSGGLSIGQAGEFDYSGSQAIKALREEGIYTILINPNIATIQTSKGLADKVYFLPVNADFVRKVIKQERPDSIYVTFGGQTALNVGIELKDEFEQLGVKVLGTPIDTIITTEDRELFARAMDEINEKCAKSASASSIEEAIKVSKDISFPVIVRAAYALGGLGSGFADNEAELIDLCTLAFATSPQVLIERSMKGWKEIEYEVVRDAFDNCITVCNMENFDPLGIHTGDSIVVAPSQTLTDEDYNMLRTTAVNVIRHLGVVGECNIQYALNPFTKEYCIIEVNARLSRSSALASKATGYPLAFTAAKLGLNIPLNEVKNSVTKVTCACFEPSLDYVVVKIPRWDLKKFTRVSTQLSSAMKSVGEVMSIGRTFEEAIQKAIRAIDYSNTGFNVKDALMSIDTELQTPSDQRLFAIANAMASGYSVDRIWELTRIDKWFLEKLMGLIRTSQLISKHDISSLPISLLKTAKQLGFADVQIAAFMNSTELAVRRIRTEAGIRPFVKQIDTVAAEFPAFTNYLYTTYNAVEHDIHFNDKGVMVLGSGVYRIGSSVEFDWCAVRAVRTLRDRGVKTIMVNYNPETVSTDYDEADRLYFENIGLETVLDIYEQESSSGIIIAMGGQTANNIALPLHRENVKILGTSPEMIDGAENRFKFSRMLDDIGVDQPKWKELTSFDEADKFCDTVGYPVLVRPSYVLSGAAMNTVYSQSDLHSYLQQAVAINKDHPVVISKYIENAKEIELDAVAREGKMVMHVISEHVENAGVHSGDATLVLPPQDLAPTTIERIVDAAAKIGEALNITGPYNIQFIAKDNEIKVIECNVRASRSFPFVSKVIGVDMISMATDVIMGNPIQPYPDVDLPRDYVAVKVPQFSFSRLSGADPVLGVEMASTGEVACFGHNKFEAYLKAMISTGFRLPKKNILISIGSYKEKAELLPYVKKLYENNYNIFATAGTSDYFMESGVPCKYLADLPAEEANNEYSLSAHLANNMIDMYINLPSNNRYRRPANYISSGYKSRRLAIDYSVPLVTNVKCAKLMIEAICRNLDFSLSTVDFQSSFQTANLPGLINISAFLPEFTSEAVSDYTKECIASGFTMARFLPFSTSSTLADKDSLSAVKKLALDHAHCDYNFSVIASSTNEVTISELTSESGCLFFHFEKDDSGIDHVTAVASHFNVWPDTQTVMTDAKSTTLASLLLLASLHNRRIHITNVSSKDDLNLIVLAKQRSLPVTFDVSVYSLFLNQNDYPGATFLPTADDQVEIWNKLSYIDCFSIGSIPSRLAKFVGNTAFTGFGVREAIPLLLTAVNEGRLTLKDVVDRFYSNPKAIFRLHDQDDSGVQLEVDRSVSWSSKDWTPFNGKKLYGSIQSVQFDGHDVFFDGELNFEHTYGRDYSSASLADKSKATRKVSALMSPGLPHAAPSLAEAFGQAPENKAHPDISLNMTPNFKPSHELVQLINSSPFYRKHIISVHQVTRSDLHVLFAIAHQMRIIVERQGVIDLCYGKLLCTMFFEPSTRTSSSFDAAMQRLGGKVVAVTASASSVNKGESLADTIRTLGCYGDAIVLRHPSIESARIAANFSPVPIINGGNGSKEHPTQAFLDLYTIREELGSVNGLTITFIGDLKYGRTVHSLARLLAFWHVELHLVSPEQLALPDDVKDDIRANGLNFIEHRELTKEVVAQSDVLYCTRVQKERFASVDEYEKLKDSFIVDNSVLASAKSHCIVMHPLPRNREISEEVDFDQRRAAYFRQMRYGLYIRMALLACVMGATEVAN.

The segment at 1 to 437 (MSGLLPSLSS…GPRDTEFLFD (437 aa)) is GATase (Glutamine amidotransferase). A disordered region spans residues 16–44 (QSEALGMPRTHGPKPSENDPKEPTCSPSP). Positions 101, 309, and 311 each coordinate L-glutamine. One can recognise a Glutamine amidotransferase type-1 domain in the interval 264–449 (RILVIDVGMK…IDVVKRSADA (186 aa)). Residue C338 is the Nucleophile; for GATase activity of the active site. Residues Q342, N380, G382, and Y383 each contribute to the L-glutamine site. Catalysis depends on for GATase activity residues H422 and E424. The linker stretch occupies residues 438 to 477 (VFIDVVKRSADAKSLQPFKLPGGTIEENRSRHPLVDAKRV). Positions 478-1014 (LILGSGGLSI…VEHDIHFNDK (537 aa)) are CPSase A. The segment at 478–1514 (LILGSGGLSI…TNVKCAKLMI (1037 aa)) is CPSase (Carbamoyl phosphate synthase). R594, R634, G640, G641, R671, M673, E678, G704, I705, H706, Q747, and E761 together coordinate ATP. In terms of domain architecture, ATP-grasp 1 spans 598 to 790 (ARAMDEINEK…LAFTAAKLGL (193 aa)). The Mg(2+) site is built by Q747, E761, and N763. 3 residues coordinate Mn(2+): Q747, E761, and N763. The CPSase B stretch occupies residues 1015–1514 (GVMVLGSGVY…TNVKCAKLMI (500 aa)). The residue at position 1119 (S1119) is a Phosphoserine. The ATP-grasp 2 domain maps to 1133–1324 (SRMLDDIGVD…MISMATDVIM (192 aa)). 10 residues coordinate ATP: R1169, K1208, I1210, E1215, G1240, V1241, H1242, S1243, Q1283, and E1295. Mg(2+) contacts are provided by Q1283, E1295, and N1297. Mn(2+)-binding residues include Q1283, E1295, and N1297. In terms of domain architecture, MGS-like spans 1390–1552 (FRLPKKNILI…INISAFLPEF (163 aa)). Positions 1515–1524 (EAICRNLDFS) are linker. Residues 1525-1853 (LSTVDFQSSF…FDGHDVFFDG (329 aa)) are defective DHOase domain. Residues 1854–1935 (ELNFEHTYGR…VQLINSSPFY (82 aa)) form a linker region. 2 positions are modified to phosphoserine: S1881 and S1885. The tract at residues 1936-2244 (RKHIISVHQV…CVMGATEVAN (309 aa)) is ATCase (Aspartate transcarbamylase). Carbamoyl phosphate is bound by residues R1988 and T1989. K2016 is a binding site for L-aspartate. Carbamoyl phosphate-binding residues include R2037, H2065, and Q2068. Positions 2098 and 2160 each coordinate L-aspartate. Carbamoyl phosphate is bound by residues L2199 and P2200.

In the N-terminal section; belongs to the CarA family. The protein in the 2nd section; belongs to the CarB family. This sequence in the 3rd section; belongs to the metallo-dependent hydrolases superfamily. DHOase family. CAD subfamily. It in the C-terminal section; belongs to the aspartate/ornithine carbamoyltransferase superfamily. ATCase family. Requires Mg(2+) as cofactor. Mn(2+) is required as a cofactor.

The catalysed reaction is hydrogencarbonate + L-glutamine + 2 ATP + H2O = carbamoyl phosphate + L-glutamate + 2 ADP + phosphate + 2 H(+). It carries out the reaction L-glutamine + H2O = L-glutamate + NH4(+). The enzyme catalyses hydrogencarbonate + NH4(+) + 2 ATP = carbamoyl phosphate + 2 ADP + phosphate + 2 H(+). It catalyses the reaction carbamoyl phosphate + L-aspartate = N-carbamoyl-L-aspartate + phosphate + H(+). It functions in the pathway pyrimidine metabolism; UMP biosynthesis via de novo pathway; (S)-dihydroorotate from bicarbonate: step 1/3. The protein operates within pyrimidine metabolism; UMP biosynthesis via de novo pathway; (S)-dihydroorotate from bicarbonate: step 2/3. Both CPSase and ATCase activities are feedback inhibited by the end product UTP. In terms of biological role, multifunctional protein that encodes the first 2 enzymatic activities of the de novo pyrimidine pathway: carbamoylphosphate synthetase (CPSase; EC 6.3.5.5) and aspartate transcarbamylase (ATCase; EC 2.1.3.2). The CPSase-function is accomplished in 2 steps, by a glutamine-dependent amidotransferase activity (GATase) that binds and cleaves glutamine to produce ammonia, followed by an ammonium-dependent carbamoyl phosphate synthetase, which reacts with the ammonia, hydrogencarbonate and ATP to form carbamoyl phosphate. The endogenously produced carbamoyl phosphate is sequestered and channeled to the ATCase active site. ATCase then catalyzes the formation of carbamoyl-L-aspartate from L-aspartate and carbamoyl phosphate. In Schizosaccharomyces pombe (strain 972 / ATCC 24843) (Fission yeast), this protein is Multifunctional protein ura1 (ura1).